The chain runs to 697 residues: Semaphorin-2A (697 aa).

The signal sequence occupies residues 1–20 (MAAKLWNLLLVAASVHLVGS). Residues 21-493 (VEQLHQDLIH…SDNIVRQIEL (473 aa)) enclose the Sema domain. Residues N63 and N66 are each glycosylated (N-linked (GlcNAc...) asparagine). C87 and C98 are disulfide-bonded. N132, N198, and N283 each carry an N-linked (GlcNAc...) asparagine glycan. Cystine bridges form between C260–C367 and C284–C326. An N-linked (GlcNAc...) asparagine glycan is attached at N369. 2 disulfides stabilise this stretch: C496-C512 and C506-C521. In terms of domain architecture, Ig-like C2-type spans 526–634 (PGLLQDVTNT…LCSYNITVDA (109 aa)). N-linked (GlcNAc...) asparagine glycans are attached at residues N534, N629, and N679. Cysteines 618 and 654 form a disulfide. Residues 673–685 (QCSTKQNNSNQKT) are compositionally biased toward polar residues. A disordered region spans residues 673-697 (QCSTKQNNSNQKTHPNDIFHSNPVA).

The protein belongs to the semaphorin family. In terms of tissue distribution, expressed in a gradient in the developing limb bud epithelium during Ti pioneer axon outgrowth.

It is found in the secreted. Its function is as follows. Acts as a chemorepulsive guidance molecule critical for axon fasciculation and for determining both the initial direction and subsequent pathfinding events of the Ti axon projection. This Schistocerca gregaria (Desert locust) protein is Semaphorin-2A (SEMA-2A).